Reading from the N-terminus, the 323-residue chain is NADH-ubiquinone oxidoreductase chain 1 (323 aa).

8 helical membrane passes run 9–29 (ILNP…LTLI), 76–96 (LFVL…PMPM), 107–127 (ILFV…SGWA), 145–165 (ISYE…SGGF), 175–195 (EATW…ISTL), 227–247 (LFFL…AVLF), 258–278 (EFTS…FLWV), and 298–318 (FLPL…ACAG).

The protein belongs to the complex I subunit 1 family.

The protein localises to the mitochondrion inner membrane. It catalyses the reaction a ubiquinone + NADH + 5 H(+)(in) = a ubiquinol + NAD(+) + 4 H(+)(out). Functionally, core subunit of the mitochondrial membrane respiratory chain NADH dehydrogenase (Complex I) that is believed to belong to the minimal assembly required for catalysis. Complex I functions in the transfer of electrons from NADH to the respiratory chain. The immediate electron acceptor for the enzyme is believed to be ubiquinone. In Gadus morhua (Atlantic cod), this protein is NADH-ubiquinone oxidoreductase chain 1 (MT-ND1).